Reading from the N-terminus, the 176-residue chain is NAD(P)H-quinone oxidoreductase subunit 6, chloroplastic (176 aa).

5 helical membrane passes run 10–30 (FLLVFLGSGLILGGLGVVLLP), 32–52 (PIYSAFSLGLVLICTSLFYIL), 61–81 (AQLLIYVGAINVLIIFAVMFM), 92–112 (LWTVGDGITSMVCISLFISLI), and 152–172 (FFLPFELISIILLVALIGAIA).

It belongs to the complex I subunit 6 family. As to quaternary structure, NDH is composed of at least 16 different subunits, 5 of which are encoded in the nucleus.

It localises to the plastid. Its subcellular location is the chloroplast thylakoid membrane. The enzyme catalyses a plastoquinone + NADH + (n+1) H(+)(in) = a plastoquinol + NAD(+) + n H(+)(out). It catalyses the reaction a plastoquinone + NADPH + (n+1) H(+)(in) = a plastoquinol + NADP(+) + n H(+)(out). Its function is as follows. NDH shuttles electrons from NAD(P)H:plastoquinone, via FMN and iron-sulfur (Fe-S) centers, to quinones in the photosynthetic chain and possibly in a chloroplast respiratory chain. The immediate electron acceptor for the enzyme in this species is believed to be plastoquinone. Couples the redox reaction to proton translocation, and thus conserves the redox energy in a proton gradient. This is NAD(P)H-quinone oxidoreductase subunit 6, chloroplastic (ndhG) from Solanum tuberosum (Potato).